The sequence spans 415 residues: PRKCA-binding protein (415 aa).

The 84-residue stretch at 22–105 (KVTLQKDAQN…EVTIHYNKLQ (84 aa)) folds into the PDZ domain. Zn(2+) contacts are provided by Cys44 and Cys46. The residue at position 82 (Thr82) is a Phosphothreonine. The AH domain maps to 144 to 357 (LCNDGLVKRL…CYAVLRDADV (214 aa)). Positions 376–415 (EEFTDGEEEEEEEDTAAGEPSRDTRGAAGPLDKGGSWCDS) are disordered. The span at 377–391 (EFTDGEEEEEEEDTA) shows a compositional bias: acidic residues. Residue Cys413 is the site of S-palmitoyl cysteine; by DHHC8 attachment.

As to quaternary structure, monomer and homodimer. Interacts with CXADR. Interacts presynaptically with the glutamate receptors GRIA2, GRIA3, GRIK3, isoform 3 of GRIA4, isoform A of GRM4, GRM7 and GRM8; with NAPA and NAPB; and with BTG2. The interaction with NAPA and NAPB disrupts the interaction with GRIA2, conducting to the internalization of GRIA2. Interacts with PRKCA; with the amine transporters SLC6A2 and SLC6A3; with the channels ASIC1 and ASIC2; with the GTP-binding proteins ARF1 and ARF3; with the ephrin receptor tyrosine kinases EPHA7, EPHB1 and EPHB2; with ERBB2 and through its PDZ domain with the C-terminal tail of PRLHR. Interacts with UNC5A. Interacts (via AH domain) with NCS1/FREQ; in a calcium-dependent manner. Interacts with F-actin and associates with the ARP2/3 complex. Interacts (via PDZ domain) with ARF1 (activated); the interaction blocks Arp2/3 complex inhibition. Interacts with SORCS3. Phosphorylation at Thr-82 appears to inhibit the interaction with AMPA receptors. Post-translationally, palmitoylation on Cys-413 is essential for long-term synaptic depression (LTD).

Its subcellular location is the cytoplasm. It is found in the perinuclear region. The protein resides in the membrane. It localises to the postsynaptic density. The protein localises to the synapse. Its subcellular location is the synaptosome. It is found in the cytoskeleton. Probable adapter protein that bind to and organize the subcellular localization of a variety of membrane proteins containing some PDZ recognition sequence. Involved in the clustering of various receptors, possibly by acting at the receptor internalization level. Plays a role in synaptic plasticity by regulating the trafficking and internalization of AMPA receptors. May be regulated upon PRKCA activation. May regulate ASIC1/ASIC3 channel. Regulates actin polymerization by inhibiting the actin-nucleating activity of the Arp2/3 complex; the function is competitive with nucleation promoting factors and is linked to neuronal morphology regulation and AMPA receptor (AMPAR) endocytosis. Via interaction with the Arp2/3 complex involved in regulation of synaptic plasicity of excitatory synapses and required for spine shrinkage during long-term depression (LTD). Involved in regulation of astrocyte morphology, antagonistic to Arp2/3 complex activator WASL/N-WASP function. This chain is PRKCA-binding protein (PICK1), found in Macaca fascicularis (Crab-eating macaque).